Consider the following 896-residue polypeptide: Phycobiliprotein ApcE (896 aa).

C190 serves as a coordination point for (2R,3E)-phycocyanobilin. PBS-linker domains are found at residues 247 to 427 (DIQG…FRKV), 508 to 684 (LGAK…QRVD), and 703 to 881 (EPEI…KQDK).

This sequence belongs to the phycobilisome linker protein family. In terms of assembly, heterodimer of ApcF (a variant beta-allophycocyanin). Phycobilisomes of this organism are composed of a two cylinder core, from which six rods radiate. The core is mainly composed of allophycocyanin alpha and beta chains and of minor components. Contains one covalently linked bilin chromophore. This protein autochromophorylates.

The protein resides in the cellular thylakoid membrane. Functionally, this protein is postulated to act both as terminal energy acceptor (by its phycobilin-like domains) and as a linker polypeptide (by its repeats and arms) that stabilizes the phycobilisome core architecture. Has intrinsic bilin lyase activity. The protein is Phycobiliprotein ApcE (apcE) of Synechocystis sp. (strain ATCC 27184 / PCC 6803 / Kazusa).